A 103-amino-acid polypeptide reads, in one-letter code: Small ribosomal subunit protein uS10 (103 aa).

Belongs to the universal ribosomal protein uS10 family. Part of the 30S ribosomal subunit.

Its function is as follows. Involved in the binding of tRNA to the ribosomes. The sequence is that of Small ribosomal subunit protein uS10 from Acidovorax sp. (strain JS42).